The sequence spans 363 residues: Phosphoserine aminotransferase (363 aa).

Residue arginine 42 participates in L-glutamate binding. Residues 76–77, tryptophan 101, threonine 151, aspartate 170, and glutamine 193 each bind pyridoxal 5'-phosphate; that span reads AS. Lysine 194 carries the N6-(pyridoxal phosphate)lysine modification. 234 to 235 provides a ligand contact to pyridoxal 5'-phosphate; sequence NT.

It belongs to the class-V pyridoxal-phosphate-dependent aminotransferase family. SerC subfamily. Homodimer. It depends on pyridoxal 5'-phosphate as a cofactor.

The protein resides in the cytoplasm. It carries out the reaction O-phospho-L-serine + 2-oxoglutarate = 3-phosphooxypyruvate + L-glutamate. The enzyme catalyses 4-(phosphooxy)-L-threonine + 2-oxoglutarate = (R)-3-hydroxy-2-oxo-4-phosphooxybutanoate + L-glutamate. Its pathway is amino-acid biosynthesis; L-serine biosynthesis; L-serine from 3-phospho-D-glycerate: step 2/3. In terms of biological role, catalyzes the reversible conversion of 3-phosphohydroxypyruvate to phosphoserine and of 3-hydroxy-2-oxo-4-phosphonooxybutanoate to phosphohydroxythreonine. The polypeptide is Phosphoserine aminotransferase (Listeria monocytogenes serovar 1/2a (strain ATCC BAA-679 / EGD-e)).